The chain runs to 435 residues: MRKIIAGVFIFVFLISNLYADLVAEVTTGVIQKPLVTVVSDNVVDQFPQQVNFVIVADLNHNAKLQANDTIKYEIKQKQNIPWKSLKSDYVVLTKYTNNSYNNYTVEVQILKRNDTSYLQAITYKNINVSLMRALAHKISNYVYQKLTGNQGFFLTKLAYVKVSNPYARYGRLYELIISDYDGYNKHVVLRQTDNPIATPSWSNDGRYIVYSSYSGGSMGVYTLEIATGKVTRITNYKGINSSPSFSPDGKEIALALSKGYSDQTNIYIMNLSTKALKRITINGINTAPKFSPNGQSIVFTSDREGRPNIYVASVNSKYPQSSILSTKIHQAYEPNYTPDGKNIVFMNQSSRTSGTQIADFNLANGSVTNITNGKADSSPTVSPYGDMVAYISTNTRGYSSLDMVSLDGDNHFNIETADNGNILIQSPSWSPKNF.

Positions 1 to 20 are cleaved as a signal peptide; it reads MRKIIAGVFIFVFLISNLYA.

It belongs to the TolB family. The Tol-Pal system is composed of five core proteins: the inner membrane proteins TolA, TolQ and TolR, the periplasmic protein TolB and the outer membrane protein Pal. They form a network linking the inner and outer membranes and the peptidoglycan layer.

The protein resides in the periplasm. Part of the Tol-Pal system, which plays a role in outer membrane invagination during cell division and is important for maintaining outer membrane integrity. This Francisella tularensis subsp. mediasiatica (strain FSC147) protein is Tol-Pal system protein TolB.